The following is a 689-amino-acid chain: uncharacterized protein (689 aa).

Disordered stretches follow at residues 121–206, 286–305, 322–414, and 552–611; these read LALK…VDPS, ASSNQSAAHPDGNNALPMDN, NSYS…SMAH, and AAMP…HLSD. The segment covering 133-158 has biased composition (low complexity); sequence SPNNSIPLMANSCLLSADNSSSSTTS. Residues 322–380 show a composition bias toward polar residues; the sequence is NSYSYDRYTPNQPSYLESKPGNHQPSYTSEQPMYSTASVPQQISNGPTAVNGLPMNSYT. 2 stretches are compositionally biased toward low complexity: residues 381–411 and 560–572; these read PHSNHLHSPSPNSNSGPTDSLSAPNSTSSPS and PSAHDSASAPSPH.

The protein localises to the cytoplasm. This is an uncharacterized protein from Schizosaccharomyces pombe (strain 972 / ATCC 24843) (Fission yeast).